The sequence spans 78 residues: D-alanyl carrier protein (78 aa).

Residues 1–78 enclose the Carrier domain; that stretch reads MEFREQVLNL…KIVEALEELR (78 aa). Serine 36 carries the post-translational modification O-(pantetheine 4'-phosphoryl)serine.

This sequence belongs to the DltC family. In terms of processing, 4'-phosphopantetheine is transferred from CoA to a specific serine of apo-DCP.

It is found in the cytoplasm. The protein operates within cell wall biogenesis; lipoteichoic acid biosynthesis. Functionally, carrier protein involved in the D-alanylation of lipoteichoic acid (LTA). The loading of thioester-linked D-alanine onto DltC is catalyzed by D-alanine--D-alanyl carrier protein ligase DltA. The DltC-carried D-alanyl group is further transferred to cell membrane phosphatidylglycerol (PG) by forming an ester bond, probably catalyzed by DltD. D-alanylation of LTA plays an important role in modulating the properties of the cell wall in Gram-positive bacteria, influencing the net charge of the cell wall. This chain is D-alanyl carrier protein, found in Staphylococcus aureus (strain Mu50 / ATCC 700699).